The primary structure comprises 192 residues: Pyridoxal 5'-phosphate synthase subunit PdxT (192 aa).

53-55 (GES) serves as a coordination point for L-glutamine. Cys-85 functions as the Nucleophile in the catalytic mechanism. L-glutamine contacts are provided by residues Arg-112 and 140 to 141 (IR). Catalysis depends on charge relay system residues His-176 and Glu-178.

Belongs to the glutaminase PdxT/SNO family. As to quaternary structure, in the presence of PdxS, forms a dodecamer of heterodimers. Only shows activity in the heterodimer.

It carries out the reaction aldehydo-D-ribose 5-phosphate + D-glyceraldehyde 3-phosphate + L-glutamine = pyridoxal 5'-phosphate + L-glutamate + phosphate + 3 H2O + H(+). The catalysed reaction is L-glutamine + H2O = L-glutamate + NH4(+). Its pathway is cofactor biosynthesis; pyridoxal 5'-phosphate biosynthesis. Catalyzes the hydrolysis of glutamine to glutamate and ammonia as part of the biosynthesis of pyridoxal 5'-phosphate. The resulting ammonia molecule is channeled to the active site of PdxS. The polypeptide is Pyridoxal 5'-phosphate synthase subunit PdxT (Natronomonas pharaonis (strain ATCC 35678 / DSM 2160 / CIP 103997 / JCM 8858 / NBRC 14720 / NCIMB 2260 / Gabara) (Halobacterium pharaonis)).